We begin with the raw amino-acid sequence, 57 residues long: DNA-directed RNA polymerase subunit Rpo6 (57 aa).

It belongs to the archaeal Rpo6/eukaryotic RPB6 RNA polymerase subunit family. In terms of assembly, part of the RNA polymerase complex.

The protein resides in the cytoplasm. It carries out the reaction RNA(n) + a ribonucleoside 5'-triphosphate = RNA(n+1) + diphosphate. Its function is as follows. DNA-dependent RNA polymerase (RNAP) catalyzes the transcription of DNA into RNA using the four ribonucleoside triphosphates as substrates. In Pyrococcus abyssi (strain GE5 / Orsay), this protein is DNA-directed RNA polymerase subunit Rpo6.